Consider the following 179-residue polypeptide: ATP synthase subunit delta (179 aa).

The protein belongs to the ATPase delta chain family. As to quaternary structure, F-type ATPases have 2 components, F(1) - the catalytic core - and F(0) - the membrane proton channel. F(1) has five subunits: alpha(3), beta(3), gamma(1), delta(1), epsilon(1). F(0) has three main subunits: a(1), b(2) and c(10-14). The alpha and beta chains form an alternating ring which encloses part of the gamma chain. F(1) is attached to F(0) by a central stalk formed by the gamma and epsilon chains, while a peripheral stalk is formed by the delta and b chains.

Its subcellular location is the cell membrane. In terms of biological role, f(1)F(0) ATP synthase produces ATP from ADP in the presence of a proton or sodium gradient. F-type ATPases consist of two structural domains, F(1) containing the extramembraneous catalytic core and F(0) containing the membrane proton channel, linked together by a central stalk and a peripheral stalk. During catalysis, ATP synthesis in the catalytic domain of F(1) is coupled via a rotary mechanism of the central stalk subunits to proton translocation. Its function is as follows. This protein is part of the stalk that links CF(0) to CF(1). It either transmits conformational changes from CF(0) to CF(1) or is implicated in proton conduction. This chain is ATP synthase subunit delta, found in Bacillus sp. (strain PS3).